The chain runs to 395 residues: Dihydroorotate dehydrogenase (quinone), mitochondrial (395 aa).

The N-terminal 10 residues, 1 to 10, are a transit peptide targeting the mitochondrion; not cleaved; it reads MAWRQLRKRA. The Mitochondrial matrix segment spans residues 1–10; sequence MAWRQLRKRA. The chain crosses the membrane as a helical span at residues 11-30; the sequence is LDAAIILGGGGLLFTSYLTA. Topologically, residues 31 to 395 are mitochondrial intermembrane; sequence TGDDHFYAEY…TDAIGVDHRR (365 aa). FMN-binding positions include 95–99 and Ser119; that span reads AGFDK. Lys99 provides a ligand contact to substrate. Substrate is bound at residue 144–148; sequence NRYGF. FMN contacts are provided by Asn180 and Asn211. Residue 211 to 216 coordinates substrate; it reads NVSSPN. Ser214 acts as the Nucleophile in catalysis. FMN is bound by residues Lys254 and Thr282. 283–284 lines the substrate pocket; it reads NT. FMN is bound by residues Gly305, Gly334, and 355–356; that span reads YT.

The protein belongs to the dihydroorotate dehydrogenase family. Type 2 subfamily. As to quaternary structure, monomer. Requires FMN as cofactor. In terms of processing, the uncleaved transit peptide is required for mitochondrial targeting and proper membrane integration.

It is found in the mitochondrion inner membrane. It carries out the reaction (S)-dihydroorotate + a quinone = orotate + a quinol. It functions in the pathway pyrimidine metabolism; UMP biosynthesis via de novo pathway; orotate from (S)-dihydroorotate (quinone route): step 1/1. Its function is as follows. Catalyzes the conversion of dihydroorotate to orotate with quinone as electron acceptor. Required for UMP biosynthesis via de novo pathway. This is Dihydroorotate dehydrogenase (quinone), mitochondrial (Dhodh) from Mus musculus (Mouse).